Here is a 276-residue protein sequence, read N- to C-terminus: Rhamnulose-1-phosphate aldolase (276 aa).

Residue Glu-117 is part of the active site. Positions 141, 143, and 212 each coordinate Zn(2+).

This sequence belongs to the aldolase class II family. RhaD subfamily. As to quaternary structure, homotetramer. Zn(2+) serves as cofactor.

The protein resides in the cytoplasm. It catalyses the reaction L-rhamnulose 1-phosphate = (S)-lactaldehyde + dihydroxyacetone phosphate. It participates in carbohydrate degradation; L-rhamnose degradation; glycerone phosphate from L-rhamnose: step 3/3. In terms of biological role, catalyzes the reversible cleavage of L-rhamnulose-1-phosphate to dihydroxyacetone phosphate (DHAP) and L-lactaldehyde. This is Rhamnulose-1-phosphate aldolase from Enterobacter sp. (strain 638).